The primary structure comprises 1393 residues: DNA-directed RNA polymerase subunit beta' (1393 aa).

Cysteine 72, cysteine 74, cysteine 87, and cysteine 90 together coordinate Zn(2+). Mg(2+) is bound by residues aspartate 463, aspartate 465, and aspartate 467. 4 residues coordinate Zn(2+): cysteine 812, cysteine 887, cysteine 894, and cysteine 897.

Belongs to the RNA polymerase beta' chain family. As to quaternary structure, the RNAP catalytic core consists of 2 alpha, 1 beta, 1 beta' and 1 omega subunit. When a sigma factor is associated with the core the holoenzyme is formed, which can initiate transcription. It depends on Mg(2+) as a cofactor. Zn(2+) is required as a cofactor.

It carries out the reaction RNA(n) + a ribonucleoside 5'-triphosphate = RNA(n+1) + diphosphate. In terms of biological role, DNA-dependent RNA polymerase catalyzes the transcription of DNA into RNA using the four ribonucleoside triphosphates as substrates. This chain is DNA-directed RNA polymerase subunit beta', found in Chlamydia felis (strain Fe/C-56) (Chlamydophila felis).